The following is a 162-amino-acid chain: Phospholipase A2 (162 aa).

A signal peptide spans 1-22; sequence MKVLQMFFCVILLCVTSVLVEA. A propeptide spanning residues 23 to 35 is cleaved from the precursor; that stretch reads KSTTKGDETASKR. Disulfide bonds link Cys-60-Cys-155, Cys-62-Cys-78, Cys-77-Cys-134, Cys-84-Cys-127, Cys-94-Cys-120, and Cys-113-Cys-125. Tyr-61, Gly-63, and Gly-65 together coordinate Ca(2+). The active site involves His-81. Asp-82 is a Ca(2+) binding site. Asp-128 is a catalytic residue.

It belongs to the phospholipase A2 family. Group I subfamily. D49 sub-subfamily. Ca(2+) is required as a cofactor. Expressed both outside and in acontia, a specialised envenomation structure laden with batteries of venom-containing nematocysts found only in the superfamily Metridioidea.

The protein resides in the secreted. It localises to the nematocyst. The enzyme catalyses a 1,2-diacyl-sn-glycero-3-phosphocholine + H2O = a 1-acyl-sn-glycero-3-phosphocholine + a fatty acid + H(+). In terms of biological role, PLA2 catalyzes the calcium-dependent hydrolysis of the 2-acyl groups in 3-sn-phosphoglycerides. In Calliactis polypus (Hermit crab anemone), this protein is Phospholipase A2.